The primary structure comprises 270 residues: MKRIALGVQYDGSAFCGWQSQPHRNTVQDELERALREFARTPVQTVVAGRTDTGVHGLGQVVHFDTELDRADVSWVRGTNSFLPKTISVQWAKPMPDEFHARFSAFERTYYYVLYVHPVRSPMLATRAGWVHTSLDVDAMQKAAAHLLGEHDFSAFRSSQCQAKTPVKHLYQIDVKQQGDFVHFRFRANAFLHHMVRNLMGCLVYIGGGRRPVEWMAEVLASRDRDFAAPTFMPDGLYLAQVGYPEQFAVPAPQTGSVPWNTVWTEQAQT.

Asp-52 (nucleophile) is an active-site residue. Tyr-110 is a binding site for substrate.

Belongs to the tRNA pseudouridine synthase TruA family. In terms of assembly, homodimer.

The enzyme catalyses uridine(38/39/40) in tRNA = pseudouridine(38/39/40) in tRNA. Its function is as follows. Formation of pseudouridine at positions 38, 39 and 40 in the anticodon stem and loop of transfer RNAs. The chain is tRNA pseudouridine synthase A from Paraburkholderia phytofirmans (strain DSM 17436 / LMG 22146 / PsJN) (Burkholderia phytofirmans).